Here is a 377-residue protein sequence, read N- to C-terminus: LIM/homeobox protein Lhx9 (377 aa).

LIM zinc-binding domains follow at residues 50–111 (ALCA…RFSV) and 112–174 (QRCA…LVQG). Disordered regions lie at residues 228–249 (NEND…QKTK), 309–346 (RQEN…TDLT), and 358–377 (SSLD…TNLF). A DNA-binding region (homeobox) is located at residues 248 to 307 (TKXMRTSFKHHQLRTMKSYFAINHNPDAKDLKQLAQKTGLTKRVLQVWFQNARAKFRRNV). A compositionally biased stretch (low complexity) spans 333 to 346 (LTPPSTATTLTDLT). A compositionally biased stretch (polar residues) spans 365–377 (SGSPPQTTLTNLF).

It localises to the nucleus. May be involved in gonadal development. The sequence is that of LIM/homeobox protein Lhx9 (lhx9) from Psalidodon fasciatus (Banded astyanax).